Consider the following 141-residue polypeptide: Transcriptional regulator MraZ (141 aa).

SpoVT-AbrB domains follow at residues 5–47 and 76–119; these read TFNL…KPAD and ANLV…DKVQ.

Belongs to the MraZ family. In terms of assembly, forms oligomers.

It localises to the cytoplasm. Its subcellular location is the nucleoid. This Mycoplasma genitalium (strain ATCC 33530 / DSM 19775 / NCTC 10195 / G37) (Mycoplasmoides genitalium) protein is Transcriptional regulator MraZ.